Reading from the N-terminus, the 312-residue chain is Zinc-finger homeodomain protein 9 (312 aa).

Positions 1–27 (MLEVRSMDMTPKSPEPESETPTRIQPA) are disordered. Position 13 is a phosphoserine (S13). The ZF-HD dimerization-type; degenerate zinc-finger motif lies at 52–103 (YKECLKNHAAAIGGHALDGCGEFMPSPSSTPSDPTSLKCAACGCHRNFHRRE). 2 disordered regions span residues 128-155 (QPHHRHHPPPPLAPPLPRSPNSSSPPPI) and 253-312 (FSGG…SSSS). The segment covering 136–155 (PPPLAPPLPRSPNSSSPPPI) has biased composition (pro residues). A DNA-binding region (homeobox) is located at residues 192-255 (RKRFRTKFSS…NNKNSFKFSG (64 aa)). S273 carries the post-translational modification Phosphoserine.

Homo- and heterodimer with other ZFHD proteins. Interacts with MIF3; this interaction prevents nuclear localization and DNA-binding to inhibit transcription regulation activity. Binds to ZHD1, ZHD2 and ZHD11. In terms of tissue distribution, mostly expressed in flowers, stems and inflorescence and, to a lower extent, in leaves and stems.

The protein resides in the nucleus. In terms of biological role, putative transcription factor. This is Zinc-finger homeodomain protein 9 (ZHD9) from Arabidopsis thaliana (Mouse-ear cress).